Consider the following 1054-residue polypeptide: Bifunctional glutamine synthetase adenylyltransferase/adenylyl-removing enzyme (1054 aa).

The adenylyl removase stretch occupies residues 1–535; the sequence is MRKTLPSIGA…LHRKLFYRPL (535 aa). Composition is skewed to polar residues over residues 138–150 and 165–175; these read SFSS…QGSD and DTANTDLSTPG. A disordered region spans residues 138–175; sequence SFSSESQQPQGSDSDSEFSFGADLSADDTANTDLSTPG. An adenylyl transferase region spans residues 541 to 1054; that stretch reads NISVGTLKLS…WGVDSIEHDY (514 aa).

The protein belongs to the GlnE family. It depends on Mg(2+) as a cofactor.

The enzyme catalyses [glutamine synthetase]-O(4)-(5'-adenylyl)-L-tyrosine + phosphate = [glutamine synthetase]-L-tyrosine + ADP. It carries out the reaction [glutamine synthetase]-L-tyrosine + ATP = [glutamine synthetase]-O(4)-(5'-adenylyl)-L-tyrosine + diphosphate. In terms of biological role, involved in the regulation of glutamine synthetase GlnA, a key enzyme in the process to assimilate ammonia. When cellular nitrogen levels are high, the C-terminal adenylyl transferase (AT) inactivates GlnA by covalent transfer of an adenylyl group from ATP to specific tyrosine residue of GlnA, thus reducing its activity. Conversely, when nitrogen levels are low, the N-terminal adenylyl removase (AR) activates GlnA by removing the adenylyl group by phosphorolysis, increasing its activity. The regulatory region of GlnE binds the signal transduction protein PII (GlnB) which indicates the nitrogen status of the cell. The polypeptide is Bifunctional glutamine synthetase adenylyltransferase/adenylyl-removing enzyme (Corynebacterium diphtheriae (strain ATCC 700971 / NCTC 13129 / Biotype gravis)).